The following is a 197-amino-acid chain: 3-isopropylmalate dehydratase small subunit (197 aa).

The protein belongs to the LeuD family. LeuD type 1 subfamily. Heterodimer of LeuC and LeuD.

The enzyme catalyses (2R,3S)-3-isopropylmalate = (2S)-2-isopropylmalate. It participates in amino-acid biosynthesis; L-leucine biosynthesis; L-leucine from 3-methyl-2-oxobutanoate: step 2/4. Catalyzes the isomerization between 2-isopropylmalate and 3-isopropylmalate, via the formation of 2-isopropylmaleate. The protein is 3-isopropylmalate dehydratase small subunit of Mycobacterium sp. (strain JLS).